The following is a 715-amino-acid chain: Polyribonucleotide nucleotidyltransferase (715 aa).

Mg(2+)-binding residues include Asp493 and Asp499. Positions 560 to 619 (PRMITVKINPEKIRDVIGKGGSVIRALTEETGTTIDISDDGVVTIASTSSEGMAEAKKRI) constitute a KH domain. In terms of domain architecture, S1 motif spans 629 to 697 (GQVYEGTVLK…EKGRVRLSAK (69 aa)).

This sequence belongs to the polyribonucleotide nucleotidyltransferase family. Mg(2+) serves as cofactor.

Its subcellular location is the cytoplasm. It catalyses the reaction RNA(n+1) + phosphate = RNA(n) + a ribonucleoside 5'-diphosphate. Its function is as follows. Involved in mRNA degradation. Catalyzes the phosphorolysis of single-stranded polyribonucleotides processively in the 3'- to 5'-direction. In Burkholderia orbicola (strain MC0-3), this protein is Polyribonucleotide nucleotidyltransferase.